The sequence spans 218 residues: Putative tRNA methyltransferase MG248 (218 aa).

This sequence belongs to the TrmK family.

It is found in the cytoplasm. The chain is Putative tRNA methyltransferase MG248 from Mycoplasma genitalium (strain ATCC 33530 / DSM 19775 / NCTC 10195 / G37) (Mycoplasmoides genitalium).